A 343-amino-acid polypeptide reads, in one-letter code: F17b-G fimbrial adhesin (343 aa).

The N-terminal stretch at 1 to 22 (MTNFYKVFLAVFILVCCNISHA) is a signal peptide. A receptor-binding lectin domain region spans residues 23–199 (VVSFIGSTEN…LNPFTLNDTV (177 aa)). Residues 65-66 (AN), 110-111 (DT), and 138-141 (STQG) contribute to the a carbohydrate site. An intrachain disulfide couples Cys75 to Cys132. The interval 200 to 343 (TSCRLLTPSA…GISTFTFSYQ (144 aa)) is fimbrillin-binding domain. The tract at residues 287 to 307 (LKFGPDSPVKGNENQWQLSTG) is disordered. Over residues 298–307 (NENQWQLSTG) the composition is skewed to polar residues.

It belongs to the fimbrial protein family.

The protein localises to the fimbrium. Essential fimbrial adhesion factor that mediates binding to N-acetylglucosamine-containing receptors in the host intestinal microvilli, leading to colonization of the intestinal tissue, and diarrhea or septicemia. Also confers adhesiveness to laminin and basement membranes. This Escherichia coli protein is F17b-G fimbrial adhesin (f17bG).